Here is an 89-residue protein sequence, read N- to C-terminus: uncharacterized protein (89 aa).

Positions 31 to 89 (TPQPLEPHEHPKPMEPNEFDPKPDDPPRNPDPSPFPNEVPKPKPSDFPIPDELYPQPIV) are disordered. Residues 36 to 58 (EPHEHPKPMEPNEFDPKPDDPPR) show a composition bias toward basic and acidic residues. Positions 59–69 (NPDPSPFPNEV) are enriched in pro residues.

This is an uncharacterized protein from Dictyostelium discoideum (Social amoeba).